Consider the following 361-residue polypeptide: MLWSYPEGFAYFNEFAQSIIWEPVAFSYALLISGADLLLLAALALLSGYLRRAIPMFLILGLSFFSVILLGPLADLALPHRATEILTRPHLASTEMHPGISVMALYGGLLWPLTFIVALIFALLYFSYPMHKKGGTFSFLSFGVKSEESYERLKPAMKVLAAILVPLSALWTIYPGMLFFSQTWIYAWKNWGLMLPMFFGETFITATGTALILYYLERMEDERIRYPLLQIHGAAAIALAGVLILQMFIWGMWGNPNFAAVVPMMQAAAVIFLLTFILTLVSAKYEAITPIVPVLALFGVVVNKWNLIINGQLISRAGMGVLEPELAPNWLAEAVSPIALAILLLVILSYIFPMEVEEDAA.

9 helical membrane-spanning segments follow: residues 26–46 (FSYA…LALL), 53–73 (AIPM…LGPL), 104–124 (ALYG…FALL), 160–180 (LAAI…MLFF), 193–213 (LMLP…ALIL), 233–253 (GAAA…WGMW), 258–278 (FAAV…TFIL), 288–308 (ITPI…WNLI), and 334–354 (AVSP…IFPM).

This sequence belongs to the NrfD family. Probably composed of three subunits: TtrA, TtrB and TtrC.

Its subcellular location is the cell membrane. Functionally, part of a membrane-bound tetrathionate reductase that catalyzes the reduction of tetrathionate to thiosulfate. TtrC probably anchors TtrA and TtrB to the external face of the cytoplasmic membrane. May transfer electrons from membrane quinol to TtrB. The polypeptide is Tetrathionate reductase subunit C (ttrC) (Archaeoglobus fulgidus (strain ATCC 49558 / DSM 4304 / JCM 9628 / NBRC 100126 / VC-16)).